The sequence spans 248 residues: 5'-nucleotidase SurE (248 aa).

Positions 8, 9, 39, and 91 each coordinate a divalent metal cation.

Belongs to the SurE nucleotidase family. A divalent metal cation serves as cofactor.

The protein resides in the cytoplasm. It catalyses the reaction a ribonucleoside 5'-phosphate + H2O = a ribonucleoside + phosphate. Functionally, nucleotidase that shows phosphatase activity on nucleoside 5'-monophosphates. The chain is 5'-nucleotidase SurE from Geotalea uraniireducens (strain Rf4) (Geobacter uraniireducens).